Here is a 592-residue protein sequence, read N- to C-terminus: Probable tubulin polyglutamylase TTLL2 (592 aa).

Disordered stretches follow at residues 1–23 (MRGR…TTTP) and 51–77 (GVSI…MAED). Residues 7–23 (CSSTQSQALGSLRTTTP) show a composition bias toward polar residues. Positions 84–427 (LKPLVFRVDE…NGLRNEGREA (344 aa)) constitute a TTL domain. ATP contacts are provided by residues Lys-212, 218 to 219 (RG), 240 to 243 (QKYI), and 253 to 255 (KCD). Arg-218 contributes to the a protein binding site. Arg-279 provides a ligand contact to L-glutamate. 298–299 (TN) contributes to the ATP binding site. Ser-301 and Lys-321 together coordinate L-glutamate. The Mg(2+) site is built by Asp-373, Glu-386, and Asn-388. Lys-404 contacts L-glutamate.

The protein belongs to the tubulin--tyrosine ligase family. Mg(2+) is required as a cofactor. As to expression, testis.

Functionally, probable tubulin polyglutamylase that generates side chains of glutamate on the gamma-carboxyl group of specific glutamate residues within the C-terminal tail of target proteins. Similar to TTLL1, may acquire enzymatic activity only in complex with other proteins as it is most likely lacking domains important for autonomous activity. Probably involved in the side-chain initiation step of the polyglutamylation reaction rather than the elongation step. The protein is Probable tubulin polyglutamylase TTLL2 of Homo sapiens (Human).